The sequence spans 449 residues: Glycosyl hydrolase-like protein 1 (449 aa).

Residues glutamine 22, histidine 119, 164 to 165, tyrosine 292, glutamate 350, tryptophan 393, and tyrosine 406 contribute to the a beta-D-glucoside site; that span reads NE. Residue glutamate 165 is the Proton donor of the active site. Glutamate 350 functions as the Nucleophile in the catalytic mechanism.

It belongs to the glycosyl hydrolase 1 family. In terms of tissue distribution, mainly expressed in flowers, flower buds and young leaves, and, to a lesser extent, in old leaves, stems and roots.

It localises to the cytoplasm. Its pathway is secondary metabolite biosynthesis; terpenoid biosynthesis. In terms of biological role, component of the oleanane-type triterpene saponins (e.g. saponarioside A and saponarioside B) biosynthetic pathway, leading to the production of natural products with detergent properties used as traditional sources of soap. Beta-glycosidase that catalyzes the transfer of glucose moiety to QA-triFRXX to produce QA-triF(Q)RXX via the elongation of the C-28 sugar chain with a D-quinovose. In Saponaria officinalis (Common soapwort), this protein is Glycosyl hydrolase-like protein 1.